A 543-amino-acid chain; its full sequence is NXPE family member 4 (543 aa).

The first 26 residues, 1-26 (MKTLASRKSLWMLLFIVIFWVSFTVF), serve as a signal peptide directing secretion. N91, N159, and N223 each carry an N-linked (GlcNAc...) asparagine glycan.

Belongs to the NXPE family.

The protein resides in the secreted. This chain is NXPE family member 4 (Nxpe4), found in Mus musculus (Mouse).